The chain runs to 360 residues: Peptide chain release factor 1 (360 aa).

Gln235 carries the post-translational modification N5-methylglutamine. Residues 281 to 307 show a composition bias toward basic and acidic residues; sequence ERQRADSERSADRRNQVGSGDRSERIR. Positions 281 to 310 are disordered; sequence ERQRADSERSADRRNQVGSGDRSERIRTYN.

It belongs to the prokaryotic/mitochondrial release factor family. Methylated by PrmC. Methylation increases the termination efficiency of RF1.

Its subcellular location is the cytoplasm. Its function is as follows. Peptide chain release factor 1 directs the termination of translation in response to the peptide chain termination codons UAG and UAA. This is Peptide chain release factor 1 from Sinorhizobium medicae (strain WSM419) (Ensifer medicae).